The sequence spans 315 residues: Glutamine synthetase nodule isozyme (315 aa).

Residues 19–99 (IIAEYIWVGG…VICDTYTPSG (81 aa)) form the GS beta-grasp domain. The GS catalytic domain maps to 106 to 315 (KRHAAAKIFS…WGVANRGASI (210 aa)).

This sequence belongs to the glutamine synthetase family. In terms of assembly, homooctamer.

The protein resides in the cytoplasm. The enzyme catalyses L-glutamate + NH4(+) + ATP = L-glutamine + ADP + phosphate + H(+). This is Glutamine synthetase nodule isozyme from Lupinus angustifolius (Narrow-leaved blue lupine).